A 354-amino-acid polypeptide reads, in one-letter code: GTPase Obg (354 aa).

An Obg domain is found at 1-159 (MKYIDEAIIH…ADLKLELKVL (159 aa)). One can recognise an OBG-type G domain in the interval 160–334 (ADVGLLGMPN…LTYAIMEFLE (175 aa)). Residues 166-173 (GMPNAGKS), 191-195 (FTTMH), 213-216 (DIPG), 284-287 (NKVD), and 315-317 (SAM) contribute to the GTP site. Residues Ser-173 and Thr-193 each coordinate Mg(2+).

Belongs to the TRAFAC class OBG-HflX-like GTPase superfamily. OBG GTPase family. In terms of assembly, monomer. Requires Mg(2+) as cofactor.

It is found in the cytoplasm. Its function is as follows. An essential GTPase which binds GTP, GDP and possibly (p)ppGpp with moderate affinity, with high nucleotide exchange rates and a fairly low GTP hydrolysis rate. Plays a role in control of the cell cycle, stress response, ribosome biogenesis and in those bacteria that undergo differentiation, in morphogenesis control. This chain is GTPase Obg, found in Nitrosospira multiformis (strain ATCC 25196 / NCIMB 11849 / C 71).